Reading from the N-terminus, the 123-residue chain is Ig heavy chain V region HPCM6 (123 aa).

One can recognise an Ig-like domain in the interval 1-114 (EVKLVESGGG…YPHWYFDVWG (114 aa)).

This is Ig heavy chain V region HPCM6 from Mus musculus (Mouse).